We begin with the raw amino-acid sequence, 739 residues long: Phosphoribosylformylglycinamidine synthase subunit PurL (739 aa).

The active site involves H53. ATP-binding residues include Y56 and K95. Position 97 (E97) interacts with Mg(2+). Substrate contacts are provided by residues 98 to 101 (SHNH) and R120. The Proton acceptor role is filled by H99. D121 is a Mg(2+) binding site. Q244 lines the substrate pocket. D274 is a binding site for Mg(2+). 318 to 320 (ESQ) serves as a coordination point for substrate. Residues D501 and G538 each coordinate ATP. Residue N539 coordinates Mg(2+). Residue S541 coordinates substrate.

It belongs to the FGAMS family. Monomer. Part of the FGAM synthase complex composed of 1 PurL, 1 PurQ and 2 PurS subunits.

It is found in the cytoplasm. The catalysed reaction is N(2)-formyl-N(1)-(5-phospho-beta-D-ribosyl)glycinamide + L-glutamine + ATP + H2O = 2-formamido-N(1)-(5-O-phospho-beta-D-ribosyl)acetamidine + L-glutamate + ADP + phosphate + H(+). The protein operates within purine metabolism; IMP biosynthesis via de novo pathway; 5-amino-1-(5-phospho-D-ribosyl)imidazole from N(2)-formyl-N(1)-(5-phospho-D-ribosyl)glycinamide: step 1/2. Functionally, part of the phosphoribosylformylglycinamidine synthase complex involved in the purines biosynthetic pathway. Catalyzes the ATP-dependent conversion of formylglycinamide ribonucleotide (FGAR) and glutamine to yield formylglycinamidine ribonucleotide (FGAM) and glutamate. The FGAM synthase complex is composed of three subunits. PurQ produces an ammonia molecule by converting glutamine to glutamate. PurL transfers the ammonia molecule to FGAR to form FGAM in an ATP-dependent manner. PurS interacts with PurQ and PurL and is thought to assist in the transfer of the ammonia molecule from PurQ to PurL. The chain is Phosphoribosylformylglycinamidine synthase subunit PurL from Listeria monocytogenes serotype 4b (strain CLIP80459).